The chain runs to 128 residues: Small ribosomal subunit protein uS9 (128 aa).

Belongs to the universal ribosomal protein uS9 family.

This chain is Small ribosomal subunit protein uS9, found in Cytophaga hutchinsonii (strain ATCC 33406 / DSM 1761 / CIP 103989 / NBRC 15051 / NCIMB 9469 / D465).